Here is a 429-residue protein sequence, read N- to C-terminus: UDP-N-acetylglucosamine 1-carboxyvinyltransferase (429 aa).

22 to 23 provides a ligand contact to phosphoenolpyruvate; that stretch reads KN. Arg102 is a binding site for UDP-N-acetyl-alpha-D-glucosamine. Cys126 serves as the catalytic Proton donor. Cys126 bears the 2-(S-cysteinyl)pyruvic acid O-phosphothioketal mark. UDP-N-acetyl-alpha-D-glucosamine-binding positions include 131-135, Asp316, and Ile338; that span reads RPVDL.

Belongs to the EPSP synthase family. MurA subfamily.

It localises to the cytoplasm. The catalysed reaction is phosphoenolpyruvate + UDP-N-acetyl-alpha-D-glucosamine = UDP-N-acetyl-3-O-(1-carboxyvinyl)-alpha-D-glucosamine + phosphate. It participates in cell wall biogenesis; peptidoglycan biosynthesis. Cell wall formation. Adds enolpyruvyl to UDP-N-acetylglucosamine. This Methylobacterium radiotolerans (strain ATCC 27329 / DSM 1819 / JCM 2831 / NBRC 15690 / NCIMB 10815 / 0-1) protein is UDP-N-acetylglucosamine 1-carboxyvinyltransferase.